We begin with the raw amino-acid sequence, 485 residues long: Cys-Gly metallodipeptidase DUG1 (485 aa).

Histidine 109 provides a ligand contact to Zn(2+). Aspartate 111 is an active-site residue. Aspartate 144 contacts Zn(2+). The active-site Proton acceptor is the glutamate 178. Positions 179, 207, and 457 each coordinate Zn(2+).

Belongs to the peptidase M20A family. In terms of assembly, homodimer. Component of the GSH degradosomal complex. It depends on Zn(2+) as a cofactor. The cofactor is Mn(2+).

The protein resides in the cytoplasm. Functionally, catalytic component of the GSH degradosomal complex involved in the degradation of glutathione (GSH) and other peptides containing a gamma-glu-X bond. Also functions as a dipeptidase with high specificity for Cys-Gly and no activity toward tri- or tetrapeptides. The polypeptide is Cys-Gly metallodipeptidase DUG1 (DUG1) (Candida albicans (strain SC5314 / ATCC MYA-2876) (Yeast)).